Consider the following 43-residue polypeptide: Potassium channel toxin gamma-KTx 4.5 (43 aa).

Intrachain disulfides connect cysteine 5/cysteine 23, cysteine 11/cysteine 34, cysteine 20/cysteine 39, and cysteine 24/cysteine 41.

This sequence belongs to the ergtoxin family. Gamma-KTx 4 subfamily. Expressed by the venom gland.

The protein localises to the secreted. In terms of biological role, reversibly blocks Kv11/ERG potassium channels. The chain is Potassium channel toxin gamma-KTx 4.5 from Centruroides exilicauda (Bark scorpion).